Here is a 490-residue protein sequence, read N- to C-terminus: Protein nucleotidyltransferase YdiU (490 aa).

Positions 89, 91, 92, 112, 124, 125, 175, and 182 each coordinate ATP. Asp251 serves as the catalytic Proton acceptor. 2 residues coordinate Mg(2+): Asn252 and Asp261. Asp261 contributes to the ATP binding site.

Belongs to the SELO family. Mg(2+) serves as cofactor. It depends on Mn(2+) as a cofactor.

The enzyme catalyses L-seryl-[protein] + ATP = 3-O-(5'-adenylyl)-L-seryl-[protein] + diphosphate. It catalyses the reaction L-threonyl-[protein] + ATP = 3-O-(5'-adenylyl)-L-threonyl-[protein] + diphosphate. The catalysed reaction is L-tyrosyl-[protein] + ATP = O-(5'-adenylyl)-L-tyrosyl-[protein] + diphosphate. It carries out the reaction L-histidyl-[protein] + UTP = N(tele)-(5'-uridylyl)-L-histidyl-[protein] + diphosphate. The enzyme catalyses L-seryl-[protein] + UTP = O-(5'-uridylyl)-L-seryl-[protein] + diphosphate. It catalyses the reaction L-tyrosyl-[protein] + UTP = O-(5'-uridylyl)-L-tyrosyl-[protein] + diphosphate. Its function is as follows. Nucleotidyltransferase involved in the post-translational modification of proteins. It can catalyze the addition of adenosine monophosphate (AMP) or uridine monophosphate (UMP) to a protein, resulting in modifications known as AMPylation and UMPylation. This is Protein nucleotidyltransferase YdiU from Vibrio vulnificus (strain YJ016).